A 156-amino-acid polypeptide reads, in one-letter code: MNINATLLGQTVAFIIFVWFCMKFVWPPLMNAIEERQKRIADGLADADRAVKDLELAQSKATDQLKDAKATANEIIEQANKRKAQIVDEAKAEADAERAKIIAQGQAEIEAERNRVKEDLRKQVATLAIYGAEKILERSIDEAAHSDIVNKLVAEL.

A helical membrane pass occupies residues 13-33 (AFIIFVWFCMKFVWPPLMNAI).

It belongs to the ATPase B chain family. F-type ATPases have 2 components, F(1) - the catalytic core - and F(0) - the membrane proton channel. F(1) has five subunits: alpha(3), beta(3), gamma(1), delta(1), epsilon(1). F(0) has three main subunits: a(1), b(2) and c(10-14). The alpha and beta chains form an alternating ring which encloses part of the gamma chain. F(1) is attached to F(0) by a central stalk formed by the gamma and epsilon chains, while a peripheral stalk is formed by the delta and b chains.

It localises to the cell inner membrane. Functionally, f(1)F(0) ATP synthase produces ATP from ADP in the presence of a proton or sodium gradient. F-type ATPases consist of two structural domains, F(1) containing the extramembraneous catalytic core and F(0) containing the membrane proton channel, linked together by a central stalk and a peripheral stalk. During catalysis, ATP synthesis in the catalytic domain of F(1) is coupled via a rotary mechanism of the central stalk subunits to proton translocation. Its function is as follows. Component of the F(0) channel, it forms part of the peripheral stalk, linking F(1) to F(0). This Shewanella sediminis (strain HAW-EB3) protein is ATP synthase subunit b.